The primary structure comprises 142 residues: Large ribosomal subunit protein uL11 (142 aa).

Belongs to the universal ribosomal protein uL11 family. Part of the ribosomal stalk of the 50S ribosomal subunit. Interacts with L10 and the large rRNA to form the base of the stalk. L10 forms an elongated spine to which L12 dimers bind in a sequential fashion forming a multimeric L10(L12)X complex. One or more lysine residues are methylated.

Its function is as follows. Forms part of the ribosomal stalk which helps the ribosome interact with GTP-bound translation factors. The sequence is that of Large ribosomal subunit protein uL11 from Hydrogenovibrio crunogenus (strain DSM 25203 / XCL-2) (Thiomicrospira crunogena).